Consider the following 135-residue polypeptide: Ribosome-binding factor A (135 aa).

The protein belongs to the RbfA family. As to quaternary structure, monomer. Binds 30S ribosomal subunits, but not 50S ribosomal subunits or 70S ribosomes.

It localises to the cytoplasm. Its function is as follows. One of several proteins that assist in the late maturation steps of the functional core of the 30S ribosomal subunit. Associates with free 30S ribosomal subunits (but not with 30S subunits that are part of 70S ribosomes or polysomes). Required for efficient processing of 16S rRNA. May interact with the 5'-terminal helix region of 16S rRNA. The chain is Ribosome-binding factor A from Sinorhizobium fredii (strain NBRC 101917 / NGR234).